A 419-amino-acid chain; its full sequence is Tyrosine--tRNA ligase (419 aa).

Residue Tyr-34 coordinates L-tyrosine. The 'HIGH' region motif lies at 39–48 (PTADSLHLGN). Residues Tyr-169 and Gln-173 each contribute to the L-tyrosine site. Residues 229-233 (KFGKS) carry the 'KMSKS' region motif. Lys-232 provides a ligand contact to ATP. Residues 353-419 (LTLVELLISA…GKKKNFVLTY (67 aa)) enclose the S4 RNA-binding domain.

It belongs to the class-I aminoacyl-tRNA synthetase family. TyrS type 1 subfamily. Homodimer.

The protein localises to the cytoplasm. The catalysed reaction is tRNA(Tyr) + L-tyrosine + ATP = L-tyrosyl-tRNA(Tyr) + AMP + diphosphate + H(+). Catalyzes the attachment of tyrosine to tRNA(Tyr) in a two-step reaction: tyrosine is first activated by ATP to form Tyr-AMP and then transferred to the acceptor end of tRNA(Tyr). The chain is Tyrosine--tRNA ligase from Lactococcus lactis subsp. lactis (strain IL1403) (Streptococcus lactis).